A 421-amino-acid chain; its full sequence is 2-deoxystreptamine N-acetyl-D-glucosaminyltransferase (421 aa).

The protein belongs to the glycosyltransferase group 1 family. Glycosyltransferase 4 subfamily.

It carries out the reaction 2-deoxystreptamine + UDP-N-acetyl-alpha-D-glucosamine = 2'-N-acetylparomamine + UDP + H(+). The protein operates within antibiotic biosynthesis; neomycin biosynthesis. In terms of biological role, glycosyltransferase involved in the biosynthesis of neomycin by mediating conversion of 2-deoxystreptamine (2-DOS) to 2'-N-acetylparomamine using UDP-alpha-D-glucosamine as sugar donor. The protein is 2-deoxystreptamine N-acetyl-D-glucosaminyltransferase (neoD) of Streptomyces fradiae (Streptomyces roseoflavus).